The sequence spans 1083 residues: Ubiquitin carboxyl-terminal hydrolase 1 (1083 aa).

The UBP-type zinc-finger motif lies at 30 to 165 (RSCVHFDKYV…KKDLLLEVVK (136 aa)). Zn(2+) contacts are provided by cysteine 32, histidine 34, cysteine 56, cysteine 59, cysteine 95, cysteine 98, cysteine 103, histidine 115, histidine 119, histidine 125, cysteine 139, and cysteine 142. Residues 202–1083 (RGLVNLGNTC…EAYILFYERI (882 aa)) form the USP domain. The Nucleophile role is filled by cysteine 211. 2 disordered regions span residues 387–424 (KDSE…DNET) and 450–486 (GSTE…ASGI). Composition is skewed to basic and acidic residues over residues 409–419 (SDHKIQSRPET) and 455–473 (LMHD…EDVR). Residues 474-485 (ATQSNEETSASG) are compositionally biased toward polar residues. Histidine 1029 functions as the Proton acceptor in the catalytic mechanism.

Belongs to the peptidase C19 family.

It carries out the reaction Thiol-dependent hydrolysis of ester, thioester, amide, peptide and isopeptide bonds formed by the C-terminal Gly of ubiquitin (a 76-residue protein attached to proteins as an intracellular targeting signal).. Its function is as follows. Recognizes and hydrolyzes the peptide bond at the C-terminal Gly of ubiquitin. Involved in the processing of poly-ubiquitin precursors as well as that of ubiquitinated proteins. Is involved in resistance to the arginine analog canavanine (CAN). This is Ubiquitin carboxyl-terminal hydrolase 1 (UBP1) from Arabidopsis thaliana (Mouse-ear cress).